The following is a 2515-amino-acid chain: Nonribosomal peptide synthetase tpzA (2515 aa).

The tract at residues 246–648 (ELATRQPGAQ…GRMGTQVKLR (403 aa)) is adenylation 1. Positions 794–867 (SEVEHLIHAI…DMATVALKTS (74 aa)) constitute a Carrier 1 domain. At Ser828 the chain carries O-(pantetheine 4'-phosphoryl)serine. Positions 924 to 1332 (DAYPCSPLQE…IRSVPHITPE (409 aa)) are condensation 1. The adenylation 2 stretch occupies residues 1357-1758 (RKQSQETPSA…GRMNDQIKLR (402 aa)). The Carrier 2 domain maps to 1900–1976 (LATTNEERTL…AILSHLTGRK (77 aa)). Ser1937 is subject to O-(pantetheine 4'-phosphoryl)serine. Positions 2013 to 2431 (VEDIYPCGPI…LGILPPEEQK (419 aa)) are condensation 2. One can recognise a Carrier 3 domain in the interval 2436–2512 (PSLSAAVVRL…AMARRSLVVS (77 aa)). Ser2473 carries the O-(pantetheine 4'-phosphoryl)serine modification.

It belongs to the NRP synthetase family.

It functions in the pathway secondary metabolite biosynthesis. Its function is as follows. Nonribosomal peptide synthetase; part of the gene cluster that mediates the biosynthesis of terreazepine,. The first step of terreazepine biosynthesis is catalyzed by the indoleamine 2,3-dioxygenase tpzB which produces N-formyl-kynurenine through the catabolism of tryptophan. The two-module NRPS tpzA then utilizes anthranilate and kynurenine to assemble terreazepine. The first adenylation domain of tpzA (A1) loads anthranilate onto the T1 domain, while A2 loads kynurenine, generated through spontaneous nonenzymatic deformylation of the tzpB-supplied N-formyl-kynurenine. TpzA produces a 2:1 mixture of S-R enantiomers, which suggests that the A2 domain accepts both D- and L-kynurenine. The peptide bond formation between the tethered amino acids is catalyzed by the first condensation domain (C1) between anthranilate's carbonyl carbon and kynurenine's aliphatic primary amine. The second C domain (C2) catalyzes the final cyclization event between the aromatic amine of kynurenine and the tethered carbonyl carbon, yielding the final terreazepine product. The T3 domain may facilitate the interaction with downstream tailoring enzymes. This Aspergillus terreus (strain NIH 2624 / FGSC A1156) protein is Nonribosomal peptide synthetase tpzA.